We begin with the raw amino-acid sequence, 377 residues long: Nitric oxide reductase FlRd-NAD(+) reductase (377 aa).

Belongs to the FAD-dependent oxidoreductase family. Requires FAD as cofactor.

It is found in the cytoplasm. It catalyses the reaction 2 reduced [nitric oxide reductase rubredoxin domain] + NAD(+) + H(+) = 2 oxidized [nitric oxide reductase rubredoxin domain] + NADH. It participates in nitrogen metabolism; nitric oxide reduction. Its function is as follows. One of at least two accessory proteins for anaerobic nitric oxide (NO) reductase. Reduces the rubredoxin moiety of NO reductase. The protein is Nitric oxide reductase FlRd-NAD(+) reductase of Klebsiella pneumoniae (strain 342).